The chain runs to 306 residues: Beta-lactamase 1 (306 aa).

An N-terminal signal peptide occupies residues 1-43; sequence MKNKRMLKIGMCVGILGLSVTSLEAFTGGALQVEAKEKTGQVK. Residue Ser-89 is the Acyl-ester intermediate of the active site. Glu-185 functions as the Proton acceptor in the catalytic mechanism. 251–253 contacts substrate; the sequence is KSG.

Belongs to the class-A beta-lactamase family.

It carries out the reaction a beta-lactam + H2O = a substituted beta-amino acid. This protein is a beta-lactamase with a substrate specificity for penicillins. This chain is Beta-lactamase 1 (blaCI), found in Bacillus mycoides.